The chain runs to 492 residues: Probable protein phosphatase 2C 33 (492 aa).

Positions 1–46 (MGSCLSAESRSPRPGSPCSPAFSVRKRKNSKKRPGSRNSSFDYRRE) are disordered. The segment covering 24 to 35 (VRKRKNSKKRPG) has biased composition (basic residues). Residues 64–393 (VACIYTQQGK…DDCAAVCLYL (330 aa)) enclose the PPM-type phosphatase domain. Mn(2+)-binding residues include Asp-100, Gly-101, Asp-338, and Asp-384. Positions 406-468 (SISKLEDGEE…ADNLDSEPGT (63 aa)) are disordered. Over residues 412-427 (DGEEEELKATTEDDDA) the composition is skewed to acidic residues. The segment covering 441 to 460 (SGKEIALDESETEKLIKEAD) has biased composition (basic and acidic residues).

Belongs to the PP2C family. It depends on Mg(2+) as a cofactor. Mn(2+) is required as a cofactor.

It catalyses the reaction O-phospho-L-seryl-[protein] + H2O = L-seryl-[protein] + phosphate. It carries out the reaction O-phospho-L-threonyl-[protein] + H2O = L-threonyl-[protein] + phosphate. This Arabidopsis thaliana (Mouse-ear cress) protein is Probable protein phosphatase 2C 33 (PPC6-1).